The sequence spans 191 residues: Pyridoxal 5'-phosphate synthase subunit PdxT (191 aa).

46–48 (GES) serves as a coordination point for L-glutamine. Residue Cys-75 is the Nucleophile of the active site. Residues Arg-101 and 129–130 (IR) contribute to the L-glutamine site. Catalysis depends on charge relay system residues His-165 and Glu-167.

Belongs to the glutaminase PdxT/SNO family. In the presence of PdxS, forms a dodecamer of heterodimers. Only shows activity in the heterodimer.

The enzyme catalyses aldehydo-D-ribose 5-phosphate + D-glyceraldehyde 3-phosphate + L-glutamine = pyridoxal 5'-phosphate + L-glutamate + phosphate + 3 H2O + H(+). It carries out the reaction L-glutamine + H2O = L-glutamate + NH4(+). The protein operates within cofactor biosynthesis; pyridoxal 5'-phosphate biosynthesis. Its function is as follows. Catalyzes the hydrolysis of glutamine to glutamate and ammonia as part of the biosynthesis of pyridoxal 5'-phosphate. The resulting ammonia molecule is channeled to the active site of PdxS. The polypeptide is Pyridoxal 5'-phosphate synthase subunit PdxT (Staphylococcus saprophyticus subsp. saprophyticus (strain ATCC 15305 / DSM 20229 / NCIMB 8711 / NCTC 7292 / S-41)).